The following is a 341-amino-acid chain: tRNA N6-adenosine threonylcarbamoyltransferase (341 aa).

Fe cation is bound by residues H115 and H119. Substrate-binding positions include 138-142 (LVSGG), D171, G184, and N276. D304 is a Fe cation binding site.

The protein belongs to the KAE1 / TsaD family. Requires Fe(2+) as cofactor.

It localises to the cytoplasm. The enzyme catalyses L-threonylcarbamoyladenylate + adenosine(37) in tRNA = N(6)-L-threonylcarbamoyladenosine(37) in tRNA + AMP + H(+). Its function is as follows. Required for the formation of a threonylcarbamoyl group on adenosine at position 37 (t(6)A37) in tRNAs that read codons beginning with adenine. Is involved in the transfer of the threonylcarbamoyl moiety of threonylcarbamoyl-AMP (TC-AMP) to the N6 group of A37, together with TsaE and TsaB. TsaD likely plays a direct catalytic role in this reaction. This Stenotrophomonas maltophilia (strain K279a) protein is tRNA N6-adenosine threonylcarbamoyltransferase.